Reading from the N-terminus, the 78-residue chain is Small ribosomal subunit protein bS20 (78 aa).

The interval 55 to 78 (KSKGLIHKNKASRDKARLASKLAK) is disordered.

It belongs to the bacterial ribosomal protein bS20 family.

Its function is as follows. Binds directly to 16S ribosomal RNA. The protein is Small ribosomal subunit protein bS20 of Streptococcus mutans serotype c (strain ATCC 700610 / UA159).